A 77-amino-acid chain; its full sequence is MARVCQVTGKGPMVGNNVSHANNKTKRRFLPNLQYRRFWLETENRWVRLRVTNAALRLIDKVGIEQVVSDLRAKGEL.

The protein belongs to the bacterial ribosomal protein bL28 family.

The sequence is that of Large ribosomal subunit protein bL28 from Methylibium petroleiphilum (strain ATCC BAA-1232 / LMG 22953 / PM1).